The following is a 438-amino-acid chain: tRNA modification GTPase MnmE (438 aa).

The (6S)-5-formyl-5,6,7,8-tetrahydrofolate site is built by arginine 21, glutamate 79, and lysine 118. Positions glycine 215–arginine 362 constitute a TrmE-type G domain. Asparagine 225 provides a ligand contact to K(+). GTP is bound by residues asparagine 225–serine 230, threonine 244–threonine 250, and aspartate 269–glycine 272. Serine 229 is a binding site for Mg(2+). Threonine 244, isoleucine 246, and threonine 249 together coordinate K(+). Threonine 250 is a Mg(2+) binding site. (6S)-5-formyl-5,6,7,8-tetrahydrofolate is bound at residue lysine 438.

The protein belongs to the TRAFAC class TrmE-Era-EngA-EngB-Septin-like GTPase superfamily. TrmE GTPase family. As to quaternary structure, homodimer. Heterotetramer of two MnmE and two MnmG subunits. The cofactor is K(+).

Its subcellular location is the cytoplasm. Its function is as follows. Exhibits a very high intrinsic GTPase hydrolysis rate. Involved in the addition of a carboxymethylaminomethyl (cmnm) group at the wobble position (U34) of certain tRNAs, forming tRNA-cmnm(5)s(2)U34. This is tRNA modification GTPase MnmE from Maricaulis maris (strain MCS10) (Caulobacter maris).